The primary structure comprises 118 residues: UPF0102 protein NE0711 (118 aa).

It belongs to the UPF0102 family.

The protein is UPF0102 protein NE0711 of Nitrosomonas europaea (strain ATCC 19718 / CIP 103999 / KCTC 2705 / NBRC 14298).